A 392-amino-acid polypeptide reads, in one-letter code: GTPase Obg (392 aa).

In terms of domain architecture, Obg spans 1–159 (MKFVDEATIK…RELRLELLLL (159 aa)). Positions 160 to 333 (ADVGMLGLPN…VCNELSDFMD (174 aa)) constitute an OBG-type G domain. Residues 166–173 (GLPNAGKS), 191–195 (FTTLI), 213–216 (DIPG), 283–286 (NKTD), and 314–316 (AAV) contribute to the GTP site. Mg(2+)-binding residues include Ser-173 and Thr-193. The disordered stretch occupies residues 364–392 (GKNVVTEDGDDDDDWDDEEDDGHVIYARD). Acidic residues predominate over residues 370–384 (EDGDDDDDWDDEEDD).

The protein belongs to the TRAFAC class OBG-HflX-like GTPase superfamily. OBG GTPase family. As to quaternary structure, monomer. Mg(2+) serves as cofactor.

It is found in the cytoplasm. In terms of biological role, an essential GTPase which binds GTP, GDP and possibly (p)ppGpp with moderate affinity, with high nucleotide exchange rates and a fairly low GTP hydrolysis rate. Plays a role in control of the cell cycle, stress response, ribosome biogenesis and in those bacteria that undergo differentiation, in morphogenesis control. In Aliivibrio salmonicida (strain LFI1238) (Vibrio salmonicida (strain LFI1238)), this protein is GTPase Obg.